Consider the following 154-residue polypeptide: Ribonuclease H (154 aa).

Positions 3–144 (ELPVVSIFTD…ADQLARDGVA (142 aa)) constitute an RNase H type-1 domain. 4 residues coordinate Mg(2+): aspartate 12, glutamate 50, aspartate 72, and aspartate 136.

It belongs to the RNase H family. Monomer. It depends on Mg(2+) as a cofactor.

It localises to the cytoplasm. It carries out the reaction Endonucleolytic cleavage to 5'-phosphomonoester.. In terms of biological role, endonuclease that specifically degrades the RNA of RNA-DNA hybrids. The chain is Ribonuclease H from Bradyrhizobium sp. (strain ORS 278).